The chain runs to 275 residues: Nitrogenase iron protein 2 (275 aa).

Glycine 9–serine 16 provides a ligand contact to ATP. Residue cysteine 97 coordinates [4Fe-4S] cluster. Position 100 is an ADP-ribosylarginine; by dinitrogenase reductase ADP-ribosyltransferase (arginine 100). Cysteine 132 serves as a coordination point for [4Fe-4S] cluster.

It belongs to the NifH/BchL/ChlL family. Homodimer. Requires [4Fe-4S] cluster as cofactor. In terms of processing, the reversible ADP-ribosylation of Arg-100 inactivates the nitrogenase reductase and regulates nitrogenase activity.

It catalyses the reaction N2 + 8 reduced [2Fe-2S]-[ferredoxin] + 16 ATP + 16 H2O = H2 + 8 oxidized [2Fe-2S]-[ferredoxin] + 2 NH4(+) + 16 ADP + 16 phosphate + 6 H(+). Its function is as follows. The key enzymatic reactions in nitrogen fixation are catalyzed by the nitrogenase complex, which has 2 components: the iron protein (component 2) and a component 1 which is either a molybdenum-iron protein, a vanadium-iron, or an iron-iron protein. This chain is Nitrogenase iron protein 2 (anfH), found in Rhodobacter capsulatus (Rhodopseudomonas capsulata).